A 773-amino-acid chain; its full sequence is ATP-dependent RNA helicase MAK5 (773 aa).

Over residues 73 to 82 (KDSNKEKVGD) the composition is skewed to basic and acidic residues. Disordered stretches follow at residues 73 to 99 (KDSN…ESEL) and 114 to 144 (SAAS…VDED). Over residues 83 to 99 (DQESVENESGSDSESEL) the composition is skewed to acidic residues. Residue T135 is modified to Phosphothreonine. S138 bears the Phosphoserine mark. The Q motif signature appears at 171–199 (EWTNLAPLSMTILQSLQNLNFLRPTEIQK). The Helicase ATP-binding domain occupies 202-399 (IPVIMQGVDV…SSSRQVKDRR (198 aa)). 215-222 (ASTGSGKT) is an ATP binding site. The DEAD box motif lies at 333 to 336 (DEAD). Residues 452–615 (DLYCYYFLTM…STDLNSRSTN (164 aa)) enclose the Helicase C-terminal domain. S678 carries the phosphoserine modification.

Belongs to the DEAD box helicase family. DDX24/MAK5 subfamily.

The protein localises to the nucleus. It localises to the nucleolus. The enzyme catalyses ATP + H2O = ADP + phosphate + H(+). ATP-binding RNA helicase involved in the biogenesis of 60S ribosomal subunits and is required for the normal formation of 25S and 5.8S rRNAs. Required for the maintenance of dsRNA killer plasmid. The sequence is that of ATP-dependent RNA helicase MAK5 (MAK5) from Saccharomyces cerevisiae (strain ATCC 204508 / S288c) (Baker's yeast).